Reading from the N-terminus, the 143-residue chain is MRFMGKNKFHTGPGPSQRQLRVGETIRRALSDVLARGDVHDTDLNRLSVTVGEVRASPDLKIATAYVLPLGGQGKDEVIALLARNKGELRRLVAKKLTLKFAPDLRFQLDETFDRMDETREMLNRAEVKRDTGPVPAGESDTE.

Residues 1 to 20 (MRFMGKNKFHTGPGPSQRQL) form a disordered region.

It belongs to the RbfA family. Monomer. Binds 30S ribosomal subunits, but not 50S ribosomal subunits or 70S ribosomes.

It is found in the cytoplasm. Functionally, one of several proteins that assist in the late maturation steps of the functional core of the 30S ribosomal subunit. Associates with free 30S ribosomal subunits (but not with 30S subunits that are part of 70S ribosomes or polysomes). Required for efficient processing of 16S rRNA. May interact with the 5'-terminal helix region of 16S rRNA. This is Ribosome-binding factor A from Roseobacter denitrificans (strain ATCC 33942 / OCh 114) (Erythrobacter sp. (strain OCh 114)).